A 171-amino-acid chain; its full sequence is Tetratricopeptide repeat protein 9C (171 aa).

TPR repeat units follow at residues 8-41 (AQLY…LRGL), 72-107 (TDCY…QPEN), and 108-141 (AKAL…QPKD).

It belongs to the TTC9 family.

This chain is Tetratricopeptide repeat protein 9C (Ttc9c), found in Rattus norvegicus (Rat).